Reading from the N-terminus, the 189-residue chain is MKLIIGLGNPGKEYSGNRHNVGFQCLSRFAKENHISFDKKCCLSRTGSGRINDEEIVLAKPQTYMNLSGKAVNQLLRRYNLKAADIIVVQDDLDLPAGKLRLRLGGSAGGHNGVSSIITDIGTKEFIRLKIGIGKPDARNNGAEVVDHVLGNFGGEEREIIETAIARAAEALACLITSGLDTASNRFNC.

Tyr-14 contributes to the tRNA binding site. His-19 functions as the Proton acceptor in the catalytic mechanism. The tRNA site is built by Tyr-64, Asn-66, and Asn-112.

The protein belongs to the PTH family. In terms of assembly, monomer.

The protein localises to the cytoplasm. The catalysed reaction is an N-acyl-L-alpha-aminoacyl-tRNA + H2O = an N-acyl-L-amino acid + a tRNA + H(+). Its function is as follows. Hydrolyzes ribosome-free peptidyl-tRNAs (with 1 or more amino acids incorporated), which drop off the ribosome during protein synthesis, or as a result of ribosome stalling. Catalyzes the release of premature peptidyl moieties from peptidyl-tRNA molecules trapped in stalled 50S ribosomal subunits, and thus maintains levels of free tRNAs and 50S ribosomes. The polypeptide is Peptidyl-tRNA hydrolase (Dehalococcoides mccartyi (strain ATCC BAA-2100 / JCM 16839 / KCTC 5957 / BAV1)).